Reading from the N-terminus, the 92-residue chain is Em-like protein GEA6 (92 aa).

2 stretches are compositionally biased toward basic and acidic residues: residues 1–18 (MASQ…KKGE) and 37–51 (AEGR…KEQL). The segment at 1–92 (MASQQEKKQL…IDESKFRTKT (92 aa)) is disordered.

Belongs to the small hydrophilic plant seed protein family. In terms of tissue distribution, present only in nearly dry and dry seeds.

Functionally, it is thought to provide protection for the cytoplasm during the desiccation stage of embryo development. This is Em-like protein GEA6 (EM6) from Arabidopsis thaliana (Mouse-ear cress).